The following is a 243-amino-acid chain: Ubiquinone/menaquinone biosynthesis C-methyltransferase UbiE (243 aa).

Residues threonine 69, aspartate 90, and 116–117 (DA) contribute to the S-adenosyl-L-methionine site.

It belongs to the class I-like SAM-binding methyltransferase superfamily. MenG/UbiE family.

It carries out the reaction a 2-demethylmenaquinol + S-adenosyl-L-methionine = a menaquinol + S-adenosyl-L-homocysteine + H(+). The catalysed reaction is a 2-methoxy-6-(all-trans-polyprenyl)benzene-1,4-diol + S-adenosyl-L-methionine = a 5-methoxy-2-methyl-3-(all-trans-polyprenyl)benzene-1,4-diol + S-adenosyl-L-homocysteine + H(+). It functions in the pathway quinol/quinone metabolism; menaquinone biosynthesis; menaquinol from 1,4-dihydroxy-2-naphthoate: step 2/2. Its pathway is cofactor biosynthesis; ubiquinone biosynthesis. In terms of biological role, methyltransferase required for the conversion of demethylmenaquinol (DMKH2) to menaquinol (MKH2) and the conversion of 2-polyprenyl-6-methoxy-1,4-benzoquinol (DDMQH2) to 2-polyprenyl-3-methyl-6-methoxy-1,4-benzoquinol (DMQH2). The polypeptide is Ubiquinone/menaquinone biosynthesis C-methyltransferase UbiE (Cupriavidus necator (strain ATCC 17699 / DSM 428 / KCTC 22496 / NCIMB 10442 / H16 / Stanier 337) (Ralstonia eutropha)).